The sequence spans 533 residues: WD repeat-containing protein PAC11 (533 aa).

Basic and acidic residues predominate over residues 1–19 (MERLKQLEEKRRQLKELRE). Positions 1 to 36 (MERLKQLEEKRRQLKELRERRKQASLFPGSETMGHH) are disordered. 2 WD repeats span residues 380–422 (FDEV…YLSL) and 432–475 (NHST…AIIG).

In terms of assembly, interacts with NUM1, when DYN1 is present.

The protein localises to the cytoplasm. It is found in the cytoskeleton. Its function is as follows. Required for viability in the absence of the kinesin-related CIN8 mitotic motor. May be a dynein intermediate chain. The sequence is that of WD repeat-containing protein PAC11 (PAC11) from Saccharomyces cerevisiae (strain ATCC 204508 / S288c) (Baker's yeast).